The primary structure comprises 822 residues: Pentatricopeptide repeat-containing protein At2g41720 (822 aa).

The tract at residues 1-28 is disordered; that stretch reads MATVTNFKLVTPPESSRADKPGATKASD. PPR repeat units follow at residues 106-136, 142-176, 177-211, 212-246, 247-281, 282-316, 319-353, 354-388, 389-423, 424-458, 459-493, 494-528, 529-563, 564-598, 599-633, 634-668, 669-699, 704-738, and 739-773; these read ARKN…MKIQ, RNDI…SCKP, DAET…AIAP, SRST…GVGP, DLVT…KVRP, DTTT…RAEC, DVVT…GLKP, NIVS…GIIP, DVVS…RRKP, NVVT…GIKP, NVVS…GINL, NTAA…KVKA, DSVT…SIPL, TKEV…GCEP, DVIA…GIEP, DSIA…EIPF, TGAV…MDPY, SIGL…GVGI, and NLKT…GIQP.

Belongs to the PPR family. P subfamily.

The polypeptide is Pentatricopeptide repeat-containing protein At2g41720 (EMB2654) (Arabidopsis thaliana (Mouse-ear cress)).